The primary structure comprises 153 residues: 3-hydroxyacyl-[acyl-carrier-protein] dehydratase FabZ (153 aa).

Histidine 52 is a catalytic residue.

The protein belongs to the thioester dehydratase family. FabZ subfamily.

It is found in the cytoplasm. It catalyses the reaction a (3R)-hydroxyacyl-[ACP] = a (2E)-enoyl-[ACP] + H2O. In terms of biological role, involved in unsaturated fatty acids biosynthesis. Catalyzes the dehydration of short chain beta-hydroxyacyl-ACPs and long chain saturated and unsaturated beta-hydroxyacyl-ACPs. In Magnetococcus marinus (strain ATCC BAA-1437 / JCM 17883 / MC-1), this protein is 3-hydroxyacyl-[acyl-carrier-protein] dehydratase FabZ.